The primary structure comprises 318 residues: Aspartate carbamoyltransferase catalytic subunit (318 aa).

Carbamoyl phosphate is bound by residues Arg-59 and Thr-60. Lys-87 provides a ligand contact to L-aspartate. Residues Arg-109, His-137, and Gln-140 each coordinate carbamoyl phosphate. The L-aspartate site is built by Arg-170 and Arg-224. Carbamoyl phosphate is bound by residues Gly-265 and Pro-266.

The protein belongs to the aspartate/ornithine carbamoyltransferase superfamily. ATCase family. As to quaternary structure, heterododecamer (2C3:3R2) of six catalytic PyrB chains organized as two trimers (C3), and six regulatory PyrI chains organized as three dimers (R2).

The catalysed reaction is carbamoyl phosphate + L-aspartate = N-carbamoyl-L-aspartate + phosphate + H(+). The protein operates within pyrimidine metabolism; UMP biosynthesis via de novo pathway; (S)-dihydroorotate from bicarbonate: step 2/3. Catalyzes the condensation of carbamoyl phosphate and aspartate to form carbamoyl aspartate and inorganic phosphate, the committed step in the de novo pyrimidine nucleotide biosynthesis pathway. In Rhizobium johnstonii (strain DSM 114642 / LMG 32736 / 3841) (Rhizobium leguminosarum bv. viciae), this protein is Aspartate carbamoyltransferase catalytic subunit.